We begin with the raw amino-acid sequence, 1029 residues long: U2 snRNP-associated SURP motif-containing protein (1029 aa).

Disordered regions lie at residues 1 to 110 (MADK…KEDE) and 141 to 273 (VNAA…DPST). Position 2 is an N-acetylalanine (Ala2). Positions 7-16 (GGSQKASSKN) are enriched in polar residues. Residues 45-54 (TRPKSPRKHN) are compositionally biased toward basic residues. Residues 55–64 (YRNESSRESL) show a composition bias toward basic and acidic residues. At Ser67 the chain carries Phosphoserine. Lys80 is covalently cross-linked (Glycyl lysine isopeptide (Lys-Gly) (interchain with G-Cter in SUMO2)). A coiled-coil region spans residues 92-121 (AKRTLSKKEQEELKKKEDEKAAAEIYEEFL). Composition is skewed to basic and acidic residues over residues 97–110 (SKKE…KEDE) and 144–155 (AKDEHETDEKRG). Residues Lys145 and Lys168 each participate in a glycyl lysine isopeptide (Lys-Gly) (interchain with G-Cter in SUMO2) cross-link. Residues 169-178 (NPPNQSSNER) are compositionally biased toward polar residues. A compositionally biased stretch (basic and acidic residues) spans 186–222 (ETKKPPLKKGEKEKKKSNLELFKEELKQIQEERDERH). The stretch at 192–232 (LKKGEKEKKKSNLELFKEELKQIQEERDERHKTKGRLSRFE) forms a coiled coil. At Ser202 the chain carries Phosphoserine. Lys208 participates in a covalent cross-link: Glycyl lysine isopeptide (Lys-Gly) (interchain with G-Cter in SUMO2). Position 236 is a phosphoserine (Ser236). Residues 239-249 (DGQRRSMDVPS) are compositionally biased toward basic and acidic residues. Residues 274–355 (TNLYLGNINP…FEMKLGWGKA (82 aa)) form the RRM domain. The stretch at 430–473 (LIHRMIEFVVREGPMFEAMIMNREINNPMFRFLFENQTPAHVYY) is one SURP motif repeat. Ser485 is modified (phosphoserine). Residues 534–679 (LKEEQRDKLE…KLQNIFLGLV (146 aa)) enclose the CID domain. Residues 704-729 (DGAPLEDVDGIPIDATPIDDLDGVPI) are disordered. Thr719 is modified (phosphothreonine). Residues Lys748 and Lys749 each participate in a glycyl lysine isopeptide (Lys-Gly) (interchain with G-Cter in SUMO2) cross-link. The residue at position 760 (Lys760) is an N6-acetyllysine; alternate. Lys760 participates in a covalent cross-link: Glycyl lysine isopeptide (Lys-Gly) (interchain with G-Cter in SUMO2); alternate. Disordered regions lie at residues 778–841 (KWEL…EEKR) and 855–1029 (QDEL…KNKH). Acidic residues predominate over residues 786-806 (EESEEEENQNQEEESEDEEDT). Ser788, Ser800, and Ser811 each carry phosphoserine. Basic and acidic residues-rich tracts occupy residues 810-841 (KSEE…EEKR) and 874-922 (QVEH…TPTR). Glycyl lysine isopeptide (Lys-Gly) (interchain with G-Cter in SUMO2) cross-links involve residues Lys829 and Lys832. Residues 837–915 (SEEKRAKLRE…ESRSKDKKEK (79 aa)) are a coiled coil. Thr931 is modified (phosphothreonine). Ser946 and Ser948 each carry phosphoserine. Residues 950–980 (KSERSERSERSHKESSRSRSSHKDSPRDASK) show a composition bias toward basic and acidic residues. The segment covering 991–1029 (TPKRSRRSRSRSPKKSGKKSRSQSRSPHRSHKKSKKNKH) has biased composition (basic residues).

It belongs to the splicing factor SR family. As to quaternary structure, interacts with ERBB4.

The protein resides in the nucleus. This chain is U2 snRNP-associated SURP motif-containing protein (U2surp), found in Mus musculus (Mouse).